Here is a 305-residue protein sequence, read N- to C-terminus: UDP-N-acetylenolpyruvoylglucosamine reductase (305 aa).

The region spanning 37-202 (GIGGPARFLA…LSVTFNLEPK (166 aa)) is the FAD-binding PCMH-type domain. Residue arginine 183 is part of the active site.

The protein belongs to the MurB family. It depends on FAD as a cofactor.

The protein localises to the cytoplasm. The catalysed reaction is UDP-N-acetyl-alpha-D-muramate + NADP(+) = UDP-N-acetyl-3-O-(1-carboxyvinyl)-alpha-D-glucosamine + NADPH + H(+). It participates in cell wall biogenesis; peptidoglycan biosynthesis. Cell wall formation. This is UDP-N-acetylenolpyruvoylglucosamine reductase from Rhodopirellula baltica (strain DSM 10527 / NCIMB 13988 / SH1).